The following is a 219-amino-acid chain: Ribose-5-phosphate isomerase A (219 aa).

Residues 28-31 (TGST), 81-84 (DGAD), and 94-97 (KGGG) contribute to the substrate site. The Proton acceptor role is filled by Glu-103. Lys-121 lines the substrate pocket.

It belongs to the ribose 5-phosphate isomerase family. Homodimer.

The catalysed reaction is aldehydo-D-ribose 5-phosphate = D-ribulose 5-phosphate. Its pathway is carbohydrate degradation; pentose phosphate pathway; D-ribose 5-phosphate from D-ribulose 5-phosphate (non-oxidative stage): step 1/1. In terms of biological role, catalyzes the reversible conversion of ribose-5-phosphate to ribulose 5-phosphate. The sequence is that of Ribose-5-phosphate isomerase A from Salmonella choleraesuis (strain SC-B67).